Reading from the N-terminus, the 121-residue chain is UPF0102 protein Dhaf_3740 (121 aa).

It belongs to the UPF0102 family.

This is UPF0102 protein Dhaf_3740 from Desulfitobacterium hafniense (strain DSM 10664 / DCB-2).